Here is a 64-residue protein sequence, read N- to C-terminus: Alpha-toxin Ts5 (64 aa).

The 63-residue stretch at 2–64 folds into the LCN-type CS-alpha/beta domain; it reads KDGYPVEGDN…KEPTKTSGRC (63 aa). 4 cysteine pairs are disulfide-bonded: C12–C64, C16–C38, C24–C44, and C28–C46.

Belongs to the long (4 C-C) scorpion toxin superfamily. Sodium channel inhibitor family. Alpha subfamily. In terms of tissue distribution, expressed by the venom gland.

It localises to the secreted. Alpha toxins bind voltage-independently at site-3 of sodium channels (Nav) and inhibit the inactivation of the activated channels, thereby blocking neuronal transmission. By extending the depolarized period it indirectly affects beta-cell voltage-dependent potassium channels, thus increasing potassium permeability. This is Alpha-toxin Ts5 from Tityus serrulatus (Brazilian scorpion).